Here is a 346-residue protein sequence, read N- to C-terminus: MAEITAKLVKELREKSGAGVMDAKKALVETDGDIEKAIELLREKGMAKAAKKADRVAAEGLTGVYVNGNVAAVIEVNAETDFVAKNAQFVELVNTTAKVIAEGKPANNEEALALIMPSGETLEAAYVSATATIGEKISFRRFALIEKTDAQHFGAYQHNGGRIGVISVVEGGDEALAKQLSMHIAAMKPTVLSYKELDEQFVKDELAQLNHVIDQDNESRAMVNKPALPHLKYGSKAQLTDDVIAQAEADIKAELAAEGKPEKIWDKIIPGKMDRFMLDNTKVDQAYTLLAQVYIMDDSKTVEAYLESVNASVVEFARFEVGEGIEKAANDFEAEVAATMAAALNN.

Residues 80–83 are involved in Mg(2+) ion dislocation from EF-Tu; sequence TDFV.

This sequence belongs to the EF-Ts family.

It is found in the cytoplasm. In terms of biological role, associates with the EF-Tu.GDP complex and induces the exchange of GDP to GTP. It remains bound to the aminoacyl-tRNA.EF-Tu.GTP complex up to the GTP hydrolysis stage on the ribosome. The polypeptide is Elongation factor Ts (tsf) (Streptococcus pneumoniae (strain ATCC BAA-255 / R6)).